Consider the following 149-residue polypeptide: MDVQLPIEAKDIQKLIPHRYPFLQLDRITAFEPMKTLTAIKNVTINEPQFQGHFPDLPVMPGVLIIEAMAQACGTLAILSEGGRKENEFFFFAGIDEARFKRQVIPGDQLVFEVELLTSRRGIGKFNAVAKVDGQVAVEAVIMCAKRVV.

Residue His53 is part of the active site.

It belongs to the thioester dehydratase family. FabZ subfamily.

It is found in the cytoplasm. It catalyses the reaction a (3R)-hydroxyacyl-[ACP] = a (2E)-enoyl-[ACP] + H2O. Functionally, involved in unsaturated fatty acids biosynthesis. Catalyzes the dehydration of short chain beta-hydroxyacyl-ACPs and long chain saturated and unsaturated beta-hydroxyacyl-ACPs. This is 3-hydroxyacyl-[acyl-carrier-protein] dehydratase FabZ from Neisseria gonorrhoeae (strain ATCC 700825 / FA 1090).